The chain runs to 446 residues: ATP-dependent protease ATPase subunit HslU (446 aa).

Residues Val-17, Gly-59–Glu-64, Asp-255, Glu-320, and Arg-392 contribute to the ATP site.

This sequence belongs to the ClpX chaperone family. HslU subfamily. As to quaternary structure, a double ring-shaped homohexamer of HslV is capped on each side by a ring-shaped HslU homohexamer. The assembly of the HslU/HslV complex is dependent on binding of ATP.

The protein localises to the cytoplasm. Functionally, ATPase subunit of a proteasome-like degradation complex; this subunit has chaperone activity. The binding of ATP and its subsequent hydrolysis by HslU are essential for unfolding of protein substrates subsequently hydrolyzed by HslV. HslU recognizes the N-terminal part of its protein substrates and unfolds these before they are guided to HslV for hydrolysis. The protein is ATP-dependent protease ATPase subunit HslU of Azotobacter vinelandii (strain DJ / ATCC BAA-1303).